Consider the following 357-residue polypeptide: Phenylalanine--tRNA ligase alpha subunit (357 aa).

A Mg(2+)-binding site is contributed by glutamate 257.

Belongs to the class-II aminoacyl-tRNA synthetase family. Phe-tRNA synthetase alpha subunit type 1 subfamily. Tetramer of two alpha and two beta subunits. The cofactor is Mg(2+).

The protein localises to the cytoplasm. The enzyme catalyses tRNA(Phe) + L-phenylalanine + ATP = L-phenylalanyl-tRNA(Phe) + AMP + diphosphate + H(+). This Ruegeria pomeroyi (strain ATCC 700808 / DSM 15171 / DSS-3) (Silicibacter pomeroyi) protein is Phenylalanine--tRNA ligase alpha subunit.